The primary structure comprises 627 residues: (R)-linalool synthase, chloroplastic (627 aa).

The N-terminal 21 residues, 1 to 21 (MAFVSIAPLASRCCVHKSFVS), are a transit peptide targeting the chloroplast. Residues aspartate 378, aspartate 382, and glutamate 530 each coordinate Mg(2+). Residues 378 to 382 (DDIYD) carry the DDXXD motif motif.

Belongs to the terpene synthase family. Tpsd subfamily. Requires Mg(2+) as cofactor. It depends on Mn(2+) as a cofactor.

The protein localises to the plastid. The protein resides in the chloroplast. It carries out the reaction (2E)-geranyl diphosphate + H2O = (R)-linalool + diphosphate. The protein operates within terpene metabolism; oleoresin biosynthesis. Terpene synthase (TPS) involved in the biosynthesis of monoterpene natural products included in conifer oleoresin secretions and volatile emissions; these compounds contribute to biotic and abiotic stress defense against herbivores and pathogens. Catalyzes the conversion of (2E)-geranyl diphosphate (GPP) to (R)-linalool. The sequence is that of (R)-linalool synthase, chloroplastic from Picea glauca (White spruce).